The following is a 283-amino-acid chain: MLRVAVPNKGSLSESAAEILSEAGYRRRTDSRDLTVLDPSNQVEFFFLRPKDIAIYVGSGELDLGITGRDLARDSGAPVAERLSLGFGRSTFRYAAPAGKDWTVEDLAGLRIATSYPNLVRDDLSARGIEASVIRLDGAVEISIQLGVADAIADVVGSGRTLRQHNLVAFGDTLCDSEGVLIERAGSPDDDSARNQLVERVRGIVFAQQNLMLDYDCPKTILDDALKITPGLESPTLSPLADENWVAVRAMVPIKGHNGVMDELADLGAKAILASNIRSCRAL.

It belongs to the ATP phosphoribosyltransferase family. Long subfamily. Mg(2+) serves as cofactor.

The protein resides in the cytoplasm. The enzyme catalyses 1-(5-phospho-beta-D-ribosyl)-ATP + diphosphate = 5-phospho-alpha-D-ribose 1-diphosphate + ATP. The protein operates within amino-acid biosynthesis; L-histidine biosynthesis; L-histidine from 5-phospho-alpha-D-ribose 1-diphosphate: step 1/9. Its activity is regulated as follows. Feedback inhibited by histidine. Functionally, catalyzes the condensation of ATP and 5-phosphoribose 1-diphosphate to form N'-(5'-phosphoribosyl)-ATP (PR-ATP). Has a crucial role in the pathway because the rate of histidine biosynthesis seems to be controlled primarily by regulation of HisG enzymatic activity. This Rhodococcus jostii (strain RHA1) protein is ATP phosphoribosyltransferase.